We begin with the raw amino-acid sequence, 303 residues long: Tumor necrosis factor receptor type 1-associated DEATH domain protein (303 aa).

A Nuclear export signal motif is present at residues 141–157; it reads QKDDELAEIDERLKSIK. In terms of domain architecture, Death spans 208–298; it reads TSAHIQHFAK…SIALDLLSLN (91 aa). Positions 224-237 match the Nuclear localization signal motif; that stretch reads KPVGRSLGKTCRAL.

As to quaternary structure, heterodimer with tnfrsf1a.

The protein resides in the nucleus. It is found in the cytoplasm. Its subcellular location is the cytoskeleton. Its function is as follows. Adapter molecule for tnfrsf1a that specifically associates with the cytoplasmic domain of activated tnfrsf1a mediating its interaction with fadd. This is Tumor necrosis factor receptor type 1-associated DEATH domain protein from Xenopus laevis (African clawed frog).